A 465-amino-acid chain; its full sequence is D-ornithine/D-lysine decarboxylase (465 aa).

Residue Lys80 is modified to N6-(pyridoxal phosphate)lysine. Pyridoxal 5'-phosphate-binding positions include Gly259 and 307–310; that span reads EPGR. Cys387 acts as the Proton donor in catalysis. Tyr422 lines the pyridoxal 5'-phosphate pocket.

The protein belongs to the Orn/Lys/Arg decarboxylase class-II family. Homodimer. The cofactor is pyridoxal 5'-phosphate.

The catalysed reaction is D-ornithine + H(+) = putrescine + CO2. It catalyses the reaction D-lysine + H(+) = cadaverine + CO2. Functionally, catalyzes the decarboxylation of D-ornithine and D-lysine. Ornithine is likely the physiological substrate. Has no detectable diaminopimelate decarboxylase activity in vitro. In Salmonella typhimurium (strain LT2 / SGSC1412 / ATCC 700720), this protein is D-ornithine/D-lysine decarboxylase.